We begin with the raw amino-acid sequence, 408 residues long: Multidrug resistance protein MdtG (408 aa).

11 helical membrane-spanning segments follow: residues Leu16–Phe36, Ile58–Ala78, Leu92–Ile112, Ala115–Val135, Thr146–Ala166, Pro173–Ile193, Leu224–Leu244, Val256–Pro276, Ile290–Thr310, Phe319–Asn339, and Ala378–Leu398.

The protein belongs to the major facilitator superfamily. DHA1 family. MdtG (TC 2.A.1.2.20) subfamily.

It localises to the cell inner membrane. Functionally, confers resistance to fosfomycin and deoxycholate. In Escherichia coli O127:H6 (strain E2348/69 / EPEC), this protein is Multidrug resistance protein MdtG.